The chain runs to 544 residues: Membrane protein insertase YidC (544 aa).

The next 5 helical transmembrane spans lie at 6–26, 345–365, 423–443, 460–480, and 503–523; these read NILLIGLLFVSFLLWQQWQTD, LLMFFQSIVGNWGAAIILITL, GGCLPILLQMPIFIALYWVLL, LSVQDPYYVMPILMGVSMFVM, and VVFTVFFLWFPAGLVLYWLVG.

It belongs to the OXA1/ALB3/YidC family. Type 1 subfamily. Interacts with the Sec translocase complex via SecD. Specifically interacts with transmembrane segments of nascent integral membrane proteins during membrane integration.

The protein localises to the cell inner membrane. Required for the insertion and/or proper folding and/or complex formation of integral membrane proteins into the membrane. Involved in integration of membrane proteins that insert both dependently and independently of the Sec translocase complex, as well as at least some lipoproteins. Aids folding of multispanning membrane proteins. This is Membrane protein insertase YidC from Shewanella woodyi (strain ATCC 51908 / MS32).